The primary structure comprises 364 residues: Chorismate synthase (364 aa).

NADP(+)-binding residues include R48 and R54. FMN is bound by residues 129–131, 243–244, G288, 303–307, and R329; these read RSS, NA, and KPTSS.

It belongs to the chorismate synthase family. Homotetramer. FMNH2 is required as a cofactor.

It catalyses the reaction 5-O-(1-carboxyvinyl)-3-phosphoshikimate = chorismate + phosphate. Its pathway is metabolic intermediate biosynthesis; chorismate biosynthesis; chorismate from D-erythrose 4-phosphate and phosphoenolpyruvate: step 7/7. Functionally, catalyzes the anti-1,4-elimination of the C-3 phosphate and the C-6 proR hydrogen from 5-enolpyruvylshikimate-3-phosphate (EPSP) to yield chorismate, which is the branch point compound that serves as the starting substrate for the three terminal pathways of aromatic amino acid biosynthesis. This reaction introduces a second double bond into the aromatic ring system. The polypeptide is Chorismate synthase (Chelativorans sp. (strain BNC1)).